The primary structure comprises 187 residues: GTP cyclohydrolase 1 (187 aa).

Zn(2+)-binding residues include Cys-76, His-79, and Cys-148.

Belongs to the GTP cyclohydrolase I family. In terms of assembly, toroid-shaped homodecamer, composed of two pentamers of five dimers.

It catalyses the reaction GTP + H2O = 7,8-dihydroneopterin 3'-triphosphate + formate + H(+). Its pathway is cofactor biosynthesis; 7,8-dihydroneopterin triphosphate biosynthesis; 7,8-dihydroneopterin triphosphate from GTP: step 1/1. The protein is GTP cyclohydrolase 1 of Streptococcus agalactiae serotype Ia (strain ATCC 27591 / A909 / CDC SS700).